A 507-amino-acid chain; its full sequence is Phosphoprotein (507 aa).

Residues 31–51 (EVSSLRDQTCNPGQENGTTGM) are compositionally biased toward polar residues. Disordered stretches follow at residues 31–86 (EVSS…CGER), 123–172 (IEDA…GYSF), and 242–307 (GIVA…DSEY). Acidic residues predominate over residues 147-160 (SLDDSTEDSGEDYS). Position 151 is a phosphoserine (serine 151). Composition is skewed to polar residues over residues 246–271 (GSTS…SAGN) and 289–300 (SGTQLPPRTSNE). Residues 304 to 376 (DSEYDDELFS…LSSIMIAIPG (73 aa)) are multimerization. The stretch at 310-339 (ELFSEIQEIRSAITKLTEDNQAILTKLDTL) forms a coiled coil. Residues 459–507 (PSKAVLASLIRSSRVDQSHKHNMLALLKNIKGDDNLNEFYQMVKSITHA) form an interaction with the nucleocapsid (N-RNA) region.

This sequence belongs to the morbillivirus P protein family. In terms of assembly, homotetramer. Interacts (via multimerization domain) with polymerase L; this interaction forms the polymerase L-P complex. Interacts (via N-terminus) with N0 (via Ncore); this interaction allows P to chaperon N0 to avoid N polymerization before encapsidation. Interacts (via C-terminus) with N-RNA template; this interaction positions the polymerase on the template for both transcription and replication. Phosphorylation on serines by host CK2 is necessary for the formation of viral factories.

Its function is as follows. Essential cofactor of the RNA polymerase L that plays a central role in the transcription and replication by forming the polymerase complex with RNA polymerase L and recruiting L to the genomic N-RNA template for RNA synthesis. Also plays a central role in the encapsidation of nascent RNA chains by forming the encapsidation complex with the nucleocapsid protein N (N-P complex). Acts as a chaperone for newly synthesized free N protein, so-called N0, allowing encapsidation of nascent RNA chains during replication. The nucleoprotein protein N prevents excessive phosphorylation of P, which leads to down-regulation of viral transcription/ replication. Participates, together with N, in the formation of viral factories (viroplasms), which are large inclusions in the host cytoplasm where replication takes place. This chain is Phosphoprotein (P/V), found in Canine distemper virus (strain Onderstepoort) (CDV).